A 242-amino-acid polypeptide reads, in one-letter code: Small ribosomal subunit protein uS3 (242 aa).

Positions 39 to 110 (IRRFIHKKYG…QVRINVVEVE (72 aa)) constitute a KH type-2 domain. The disordered stretch occupies residues 216–242 (QSMPVGASPRRRGNRRPQQFEDRSNEG). Over residues 233–242 (QQFEDRSNEG) the composition is skewed to basic and acidic residues.

Belongs to the universal ribosomal protein uS3 family. As to quaternary structure, part of the 30S ribosomal subunit. Forms a tight complex with proteins S10 and S14.

Its function is as follows. Binds the lower part of the 30S subunit head. Binds mRNA in the 70S ribosome, positioning it for translation. This Prochlorococcus marinus (strain MIT 9303) protein is Small ribosomal subunit protein uS3.